Consider the following 264-residue polypeptide: Hydroxyethylthiazole kinase (264 aa).

Residue Met-45 participates in substrate binding. Arg-121 and Ser-167 together coordinate ATP. Position 194 (Gly-194) interacts with substrate.

Belongs to the Thz kinase family. Mg(2+) is required as a cofactor.

It catalyses the reaction 5-(2-hydroxyethyl)-4-methylthiazole + ATP = 4-methyl-5-(2-phosphooxyethyl)-thiazole + ADP + H(+). It participates in cofactor biosynthesis; thiamine diphosphate biosynthesis; 4-methyl-5-(2-phosphoethyl)-thiazole from 5-(2-hydroxyethyl)-4-methylthiazole: step 1/1. In terms of biological role, catalyzes the phosphorylation of the hydroxyl group of 4-methyl-5-beta-hydroxyethylthiazole (THZ). This is Hydroxyethylthiazole kinase from Aliivibrio salmonicida (strain LFI1238) (Vibrio salmonicida (strain LFI1238)).